The primary structure comprises 148 residues: Large ribosomal subunit protein bL19 (148 aa).

Belongs to the bacterial ribosomal protein bL19 family.

In terms of biological role, this protein is located at the 30S-50S ribosomal subunit interface and may play a role in the structure and function of the aminoacyl-tRNA binding site. The sequence is that of Large ribosomal subunit protein bL19 from Paramagnetospirillum magneticum (strain ATCC 700264 / AMB-1) (Magnetospirillum magneticum).